A 344-amino-acid polypeptide reads, in one-letter code: Protein RecA (344 aa).

Residue 66-73 participates in ATP binding; the sequence is GPESSGKT.

It belongs to the RecA family.

It localises to the cytoplasm. Can catalyze the hydrolysis of ATP in the presence of single-stranded DNA, the ATP-dependent uptake of single-stranded DNA by duplex DNA, and the ATP-dependent hybridization of homologous single-stranded DNAs. It interacts with LexA causing its activation and leading to its autocatalytic cleavage. This Azoarcus sp. (strain BH72) protein is Protein RecA.